We begin with the raw amino-acid sequence, 242 residues long: uncharacterized protein (242 aa).

This is an uncharacterized protein from Haemophilus influenzae (strain ATCC 51907 / DSM 11121 / KW20 / Rd).